The following is a 264-amino-acid chain: Transformer-2 sex-determining protein (264 aa).

The interval 1 to 96 (MDREPLSSGR…HKSREHPQAS (96 aa)) is disordered. The span at 13-22 (CSARYKHKRS) shows a compositional bias: basic residues. Over residues 23–33 (ASSSSAGTTSS) the composition is skewed to low complexity. Ser40 carries the post-translational modification Phosphoserine. A compositionally biased stretch (basic residues) spans 47–61 (SRRHQRSSSRRRSRS). Basic and acidic residues predominate over residues 71–85 (EPRHRSGRSSRDRER). An RRM domain is found at 97-175 (RCIGVFGLNT…RRIRVDFSIT (79 aa)). The segment at 176–196 (QRAHTPTPGVYLGRQPRGKAP) is linker. The segment at 179-264 (HTPTPGVYLG…PQLRRTSSRY (86 aa)) is disordered. A Phosphothreonine modification is found at Thr180. The segment covering 191-206 (PRGKAPRSFSPRRGRR) has biased composition (basic residues). Over residues 207–234 (VYHDRSASPYDNYRDRYDYRNDRYDRNL) the composition is skewed to basic and acidic residues. Ser212 and Ser214 each carry phosphoserine. Basic residues predominate over residues 235–250 (RRSPSRNRYTRNRSYS). Ser254 bears the Phosphoserine mark.

This sequence belongs to the splicing factor SR family. Extensively phosphorylated on serine residues in the RS domain. Isoform Tmaj and isoform Tmin are expressed in males and females. Isoform msTmaj and isoform msTmin are present only in male germ cells.

Its function is as follows. Required for female sex determination in somatic cells and for spermatogenesis in male germ cells. Positive regulator of female-specific splicing and/or polyadenylation of doublesex (dsx) pre-mRNA. Splicing requires an enhancer complex, dsxRE (dsx repeat element: which contains six copies of a 13-nucleotide repeat and a purine-rich enhancer (PRE)). DsxRE is formed through cooperative interactions between tra, tra2 and the sr proteins, and these interactions require both the repeat sequences and PRE. PRE is required for specific binding of tra2 to the dsxRE. Protein-RNA and protein-protein interactions are involved in tra-2 dependent activation and repression of alternative splicing. Together with tra-2, plays a role in switching fru splicing from the male-specific pattern to the female-specific pattern through activation of the female-specific fru 5'-splice site. The chain is Transformer-2 sex-determining protein (tra2) from Drosophila melanogaster (Fruit fly).